The sequence spans 115 residues: Aspartate 1-decarboxylase (115 aa).

S25 acts as the Schiff-base intermediate with substrate; via pyruvic acid in catalysis. S25 bears the Pyruvic acid (Ser) mark. Residue T57 participates in substrate binding. Y58 serves as the catalytic Proton donor. A substrate-binding site is contributed by 71-73; that stretch reads GAA.

The protein belongs to the PanD family. Heterooctamer of four alpha and four beta subunits. It depends on pyruvate as a cofactor. In terms of processing, is synthesized initially as an inactive proenzyme, which is activated by self-cleavage at a specific serine bond to produce a beta-subunit with a hydroxyl group at its C-terminus and an alpha-subunit with a pyruvoyl group at its N-terminus.

It is found in the cytoplasm. It catalyses the reaction L-aspartate + H(+) = beta-alanine + CO2. It functions in the pathway cofactor biosynthesis; (R)-pantothenate biosynthesis; beta-alanine from L-aspartate: step 1/1. Functionally, catalyzes the pyruvoyl-dependent decarboxylation of aspartate to produce beta-alanine. This chain is Aspartate 1-decarboxylase, found in Campylobacter curvus (strain 525.92).